Here is a 506-residue protein sequence, read N- to C-terminus: Maturase K (506 aa).

It belongs to the intron maturase 2 family. MatK subfamily.

The protein localises to the plastid. It localises to the chloroplast. Its function is as follows. Usually encoded in the trnK tRNA gene intron. Probably assists in splicing its own and other chloroplast group II introns. The protein is Maturase K of Trifolium willdenovii (Tomcat clover).